Consider the following 882-residue polypeptide: Valine--tRNA ligase (882 aa).

A 'HIGH' region motif is present at residues 45–55; the sequence is PNVTGKLHLGH. A 'KMSKS' region motif is present at residues 519-523; sequence KMSKS. Lys-522 is a binding site for ATP. Residues 808–882 adopt a coiled-coil conformation; it reads LADLLNVEEE…RIAEMKKIKS (75 aa).

It belongs to the class-I aminoacyl-tRNA synthetase family. ValS type 1 subfamily. In terms of assembly, monomer.

The protein localises to the cytoplasm. The catalysed reaction is tRNA(Val) + L-valine + ATP = L-valyl-tRNA(Val) + AMP + diphosphate. Functionally, catalyzes the attachment of valine to tRNA(Val). As ValRS can inadvertently accommodate and process structurally similar amino acids such as threonine, to avoid such errors, it has a 'posttransfer' editing activity that hydrolyzes mischarged Thr-tRNA(Val) in a tRNA-dependent manner. This is Valine--tRNA ligase from Streptococcus pyogenes serotype M1.